A 937-amino-acid chain; its full sequence is ABC transporter A family member 4 (937 aa).

The next 7 membrane-spanning stretches (helical) occupy residues 34–54 (LIVI…LFDT), 340–360 (IASV…FPVI), 394–414 (FLAI…AIGL), 423–443 (SIQF…AFLV), 455–475 (VAAY…FQFM), 478–498 (GLSF…FSLY), and 528–548 (AMDE…IAAY). One can recognise an ABC transporter domain in the interval 618 to 852 (DKLKKVYPGR…YGGSYVLTMT (235 aa)). 653 to 660 (GPNGAGKT) provides a ligand contact to ATP.

The protein belongs to the ABC transporter superfamily. ABCA family. CPR flippase (TC 3.A.1.211) subfamily.

It is found in the membrane. The chain is ABC transporter A family member 4 (ABCA4) from Arabidopsis thaliana (Mouse-ear cress).